The chain runs to 247 residues: Protein NipSnap homolog 3A (247 aa).

An N6-acetyllysine mark is found at K48 and K166.

This sequence belongs to the NipSnap family. In terms of assembly, interacts with the Salmonella typhimurium virulence protein spiC. As to expression, ubiquitous. Highly expressed in liver, kidney and muscle. Expressed at intermediate level in brain, heart, colon, thymus, kidney, small intestine, placenta, lung, leukocytes and spleen.

It localises to the cytoplasm. Its subcellular location is the cytosol. This Homo sapiens (Human) protein is Protein NipSnap homolog 3A (NIPSNAP3A).